The primary structure comprises 135 residues: Protein PsiE homolog (135 aa).

Transmembrane regions (helical) follow at residues 20–40 (VGLIMLAAILVVFLVKETIHL), 54–74 (YMLIEGIVIYFLYFEFIALIV), 82–102 (HFPLRYFIYIGITAIIRLIIV), and 107–127 (PIDTLIYSGSILVLVVTLYLA).

This sequence belongs to the PsiE family.

The protein resides in the cell inner membrane. The chain is Protein PsiE homolog from Yersinia pseudotuberculosis serotype IB (strain PB1/+).